A 488-amino-acid polypeptide reads, in one-letter code: Nitrogen metabolite repression protein nmr (488 aa).

The segment at 1–45 is disordered; the sequence is MPAEILSELPLRPAPRDIKIPNAMHNEERRHKHSRSSYSEMSPLM. A compositionally biased stretch (basic and acidic residues) spans 14–29; sequence APRDIKIPNAMHNEER. Residues 36 to 45 are compositionally biased toward polar residues; that stretch reads SSYSEMSPLM. NADP(+) is bound by residues 71-76, asparagine 165, lysine 215, and 237-240; these read NAAGRQ and YNNN. NAD(+)-binding positions include 75-76, 165-167, lysine 215, and 237-240; these read RQ, NTT, and YNNN. The segment at 412–488 is dispensable for NMR function; sequence EEYDGGGGNN…NKRADEEWLA (77 aa). The disordered stretch occupies residues 422-488; sequence IGNNHNNHHQ…NKRADEEWLA (67 aa). Low complexity predominate over residues 438–459; it reads HQNGHQNGHNGINGHIVNGGVD. Positions 460–473 are enriched in acidic residues; sequence SESEEEDSDSDDEG.

Belongs to the NmrA-type oxidoreductase family. As to quaternary structure, interacts with nit-2.

It localises to the nucleus. Its function is as follows. May be a redox sensor protein. Negative transcriptional regulator involved in the post-transcriptional modulation of the GATA-type transcription factor nit-2, forming part of a system controlling nitrogen metabolite repression. This is Nitrogen metabolite repression protein nmr (nmr) from Neurospora crassa (strain ATCC 24698 / 74-OR23-1A / CBS 708.71 / DSM 1257 / FGSC 987).